The following is a 195-amino-acid chain: Exosome complex component CSL4 (195 aa).

At Ser21 the chain carries Phosphoserine. One can recognise an S1 motif domain in the interval 66 to 147; sequence DVGAVVTCKV…AQSNYLLTTA (82 aa).

It belongs to the CSL4 family. As to quaternary structure, component of the RNA exosome core complex (Exo-9), composed of EXOSC1, EXOSC2, EXOSC3, EXOSC4, EXOSC5, EXOSC6, EXOSC7, EXOSC8 and EXOSC9; within the complex interacts with EXOSC6. The catalytically inactive RNA exosome core complex (Exo-9) associates with the catalytic subunit EXOSC10/RRP6. Exo-9 may associate with DIS3 to form the nucleolar exosome complex, or DIS3L to form the cytoplasmic exosome complex. Exo-9 is formed by a hexameric base ring consisting of the heterodimers EXOSC4-EXOSC9, EXOSC5-EXOSC8 and EXOSC6-EXOSC7, and a cap ring consisting of EXOSC1, EXOSC2 and EXOSC3. The RNA exosome complex associates with cofactors C1D/RRP47, MPHOSPH6/MPP6 and MTREX/MTR4. Interacts with DDX60.

The protein resides in the nucleus. It is found in the nucleolus. Its subcellular location is the cytoplasm. In terms of biological role, non-catalytic component of the RNA exosome complex which has 3'-&gt;5' exoribonuclease activity and participates in a multitude of cellular RNA processing and degradation events. In the nucleus, the RNA exosome complex is involved in proper maturation of stable RNA species such as rRNA, snRNA and snoRNA, in the elimination of RNA processing by-products and non-coding 'pervasive' transcripts, such as antisense RNA species and promoter-upstream transcripts (PROMPTs), and of mRNAs with processing defects, thereby limiting or excluding their export to the cytoplasm. The RNA exosome may be involved in Ig class switch recombination (CSR) and/or Ig variable region somatic hypermutation (SHM) by targeting AICDA deamination activity to transcribed dsDNA substrates. In the cytoplasm, the RNA exosome complex is involved in general mRNA turnover and specifically degrades inherently unstable mRNAs containing AU-rich elements (AREs) within their 3' untranslated regions, and in RNA surveillance pathways, preventing translation of aberrant mRNAs. It seems to be involved in degradation of histone mRNA. The catalytic inactive RNA exosome core complex of 9 subunits (Exo-9) is proposed to play a pivotal role in the binding and presentation of RNA for ribonucleolysis, and to serve as a scaffold for the association with catalytic subunits and accessory proteins or complexes. EXOSC1 as peripheral part of the Exo-9 complex stabilizes the hexameric ring of RNase PH-domain subunits through contacts with EXOSC6 and EXOSC8. The polypeptide is Exosome complex component CSL4 (Exosc1) (Mus musculus (Mouse)).